A 283-amino-acid chain; its full sequence is 4-diphosphocytidyl-2-C-methyl-D-erythritol kinase (283 aa).

K10 is an active-site residue. 99-109 contacts ATP; that stretch reads PMGGGLGGGSS. The active site involves D141.

The protein belongs to the GHMP kinase family. IspE subfamily. Homodimer.

The enzyme catalyses 4-CDP-2-C-methyl-D-erythritol + ATP = 4-CDP-2-C-methyl-D-erythritol 2-phosphate + ADP + H(+). It functions in the pathway isoprenoid biosynthesis; isopentenyl diphosphate biosynthesis via DXP pathway; isopentenyl diphosphate from 1-deoxy-D-xylulose 5-phosphate: step 3/6. In terms of biological role, catalyzes the phosphorylation of the position 2 hydroxy group of 4-diphosphocytidyl-2C-methyl-D-erythritol. The sequence is that of 4-diphosphocytidyl-2-C-methyl-D-erythritol kinase from Salmonella choleraesuis (strain SC-B67).